The chain runs to 231 residues: Flagellar L-ring protein (231 aa).

Residues 1-18 (MNRLLSVFALGGAVLLAG) form the signal peptide. Cys19 carries the N-palmitoyl cysteine lipid modification. Cys19 carries the S-diacylglycerol cysteine lipid modification.

This sequence belongs to the FlgH family. As to quaternary structure, the basal body constitutes a major portion of the flagellar organelle and consists of four rings (L,P,S, and M) mounted on a central rod.

It localises to the cell outer membrane. The protein resides in the bacterial flagellum basal body. Its function is as follows. Assembles around the rod to form the L-ring and probably protects the motor/basal body from shearing forces during rotation. This Pseudomonas putida (strain ATCC 700007 / DSM 6899 / JCM 31910 / BCRC 17059 / LMG 24140 / F1) protein is Flagellar L-ring protein.